We begin with the raw amino-acid sequence, 412 residues long: Putative competence-damage inducible protein (412 aa).

Belongs to the CinA family.

This chain is Putative competence-damage inducible protein, found in Clostridium perfringens (strain ATCC 13124 / DSM 756 / JCM 1290 / NCIMB 6125 / NCTC 8237 / Type A).